A 317-amino-acid chain; its full sequence is Ribosome production factor 2 homolog (317 aa).

A Brix domain is found at Lys-28–Asp-240. Positions Met-287–Glu-317 are disordered. Residues Ser-293, Ser-300, Ser-313, and Ser-316 each carry the phosphoserine modification. Positions Glu-296–Glu-317 are enriched in acidic residues.

Belongs to the RPF2 family. As to quaternary structure, component of a hexameric 5S RNP precursor complex, composed of 5S RNA, rrs1, rpf2, rpl5a/rpl5b, rpl11a/rpl11b and syo1; this complex acts as a precursor for ribosome assembly.

It is found in the nucleus. It localises to the nucleolus. This chain is Ribosome production factor 2 homolog, found in Schizosaccharomyces pombe (strain 972 / ATCC 24843) (Fission yeast).